The following is a 437-amino-acid chain: Branched-chain amino acid transport system 2 carrier protein (437 aa).

The next 12 membrane-spanning stretches (helical) occupy residues 9–29 (LLAL…IIFP), 43–63 (AAFG…VALA), 80–100 (AGVA…ATPR), 117–137 (GGVP…FLVL), 149–169 (VITP…IFAP), 192–212 (GYLT…ATAI), 228–248 (MIAG…LFYL), 280–300 (LLLA…LITA), 308–328 (LLPV…LLVA), 335–355 (LISL…VLIA), 369–389 (VFVP…LGAA), and 404–424 (LADQ…LAVV).

The protein belongs to the branched chain amino acid transporter family.

Its subcellular location is the cell inner membrane. Its function is as follows. Component of the LIV-II transport system for branched-chain amino acids. BraB is specific for isoleucine, leucine and valine. The LIV-II transport system is coupled to sodium and lithium ions. The sequence is that of Branched-chain amino acid transport system 2 carrier protein (braB) from Pseudomonas aeruginosa (strain ATCC 15692 / DSM 22644 / CIP 104116 / JCM 14847 / LMG 12228 / 1C / PRS 101 / PAO1).